The primary structure comprises 471 residues: ATP synthase subunit beta (471 aa).

154-161 provides a ligand contact to ATP; that stretch reads GGAGVGKT.

Belongs to the ATPase alpha/beta chains family. As to quaternary structure, F-type ATPases have 2 components, CF(1) - the catalytic core - and CF(0) - the membrane proton channel. CF(1) has five subunits: alpha(3), beta(3), gamma(1), delta(1), epsilon(1). CF(0) has three main subunits: a(1), b(2) and c(9-12). The alpha and beta chains form an alternating ring which encloses part of the gamma chain. CF(1) is attached to CF(0) by a central stalk formed by the gamma and epsilon chains, while a peripheral stalk is formed by the delta and b chains.

The protein resides in the cell membrane. It carries out the reaction ATP + H2O + 4 H(+)(in) = ADP + phosphate + 5 H(+)(out). In terms of biological role, produces ATP from ADP in the presence of a proton gradient across the membrane. The catalytic sites are hosted primarily by the beta subunits. The protein is ATP synthase subunit beta of Mesomycoplasma hyopneumoniae (strain 232) (Mycoplasma hyopneumoniae).